Consider the following 308-residue polypeptide: Protoheme IX farnesyltransferase 2 (308 aa).

Transmembrane regions (helical) follow at residues 20-40, 47-67, 92-114, 118-137, 144-164, 174-194, 218-238, 240-260, and 275-295; these read VTKP…FLLA, AVLM…GCAI, IPLK…LLAW, LAAL…LYSL, VYGT…GYCA, LILL…IAIF, LHIV…PLAG, TGVG…LMAL, and QVFG…ALDF.

Belongs to the UbiA prenyltransferase family. Protoheme IX farnesyltransferase subfamily.

Its subcellular location is the cell inner membrane. It catalyses the reaction heme b + (2E,6E)-farnesyl diphosphate + H2O = Fe(II)-heme o + diphosphate. The protein operates within porphyrin-containing compound metabolism; heme O biosynthesis; heme O from protoheme: step 1/1. Converts heme B (protoheme IX) to heme O by substitution of the vinyl group on carbon 2 of heme B porphyrin ring with a hydroxyethyl farnesyl side group. This Shewanella loihica (strain ATCC BAA-1088 / PV-4) protein is Protoheme IX farnesyltransferase 2.